A 194-amino-acid polypeptide reads, in one-letter code: Flagellin A2 (194 aa).

The propeptide occupies 1-12 (MFEFITDEDERG).

Belongs to the archaeal flagellin family. In terms of processing, glycosylated.

Its subcellular location is the archaeal flagellum. Flagellin is the subunit protein which polymerizes to form the filaments of archaeal flagella. The chain is Flagellin A2 (flaA2) from Halobacterium salinarum (strain ATCC 700922 / JCM 11081 / NRC-1) (Halobacterium halobium).